Reading from the N-terminus, the 366-residue chain is Alanine racemase (366 aa).

Catalysis depends on Lys-40, which acts as the Proton acceptor; specific for D-alanine. At Lys-40 the chain carries N6-(pyridoxal phosphate)lysine. Arg-136 lines the substrate pocket. The active-site Proton acceptor; specific for L-alanine is the Tyr-263. Met-310 provides a ligand contact to substrate.

Belongs to the alanine racemase family. The cofactor is pyridoxal 5'-phosphate.

It carries out the reaction L-alanine = D-alanine. It participates in amino-acid biosynthesis; D-alanine biosynthesis; D-alanine from L-alanine: step 1/1. Functionally, catalyzes the interconversion of L-alanine and D-alanine. May also act on other amino acids. This is Alanine racemase (alr) from Streptococcus pyogenes serotype M5 (strain Manfredo).